A 196-amino-acid polypeptide reads, in one-letter code: Peptidyl-tRNA hydrolase (196 aa).

Residue Tyr14 participates in tRNA binding. Catalysis depends on His19, which acts as the Proton acceptor. 3 residues coordinate tRNA: Tyr64, Asn66, and Asn112.

The protein belongs to the PTH family. As to quaternary structure, monomer.

It is found in the cytoplasm. The catalysed reaction is an N-acyl-L-alpha-aminoacyl-tRNA + H2O = an N-acyl-L-amino acid + a tRNA + H(+). Functionally, hydrolyzes ribosome-free peptidyl-tRNAs (with 1 or more amino acids incorporated), which drop off the ribosome during protein synthesis, or as a result of ribosome stalling. Catalyzes the release of premature peptidyl moieties from peptidyl-tRNA molecules trapped in stalled 50S ribosomal subunits, and thus maintains levels of free tRNAs and 50S ribosomes. This is Peptidyl-tRNA hydrolase from Methylocella silvestris (strain DSM 15510 / CIP 108128 / LMG 27833 / NCIMB 13906 / BL2).